A 150-amino-acid polypeptide reads, in one-letter code: D-aminoacyl-tRNA deacylase (150 aa).

Residues 137–138 carry the Gly-cisPro motif, important for rejection of L-amino acids motif; the sequence is GP.

This sequence belongs to the DTD family. In terms of assembly, homodimer.

The protein localises to the cytoplasm. It carries out the reaction glycyl-tRNA(Ala) + H2O = tRNA(Ala) + glycine + H(+). It catalyses the reaction a D-aminoacyl-tRNA + H2O = a tRNA + a D-alpha-amino acid + H(+). In terms of biological role, an aminoacyl-tRNA editing enzyme that deacylates mischarged D-aminoacyl-tRNAs. Also deacylates mischarged glycyl-tRNA(Ala), protecting cells against glycine mischarging by AlaRS. Acts via tRNA-based rather than protein-based catalysis; rejects L-amino acids rather than detecting D-amino acids in the active site. By recycling D-aminoacyl-tRNA to D-amino acids and free tRNA molecules, this enzyme counteracts the toxicity associated with the formation of D-aminoacyl-tRNA entities in vivo and helps enforce protein L-homochirality. This Listeria innocua serovar 6a (strain ATCC BAA-680 / CLIP 11262) protein is D-aminoacyl-tRNA deacylase.